Consider the following 189-residue polypeptide: Small ribosomal subunit protein uS4 (189 aa).

The S4 RNA-binding domain maps to 107–181 (RRLQTQVFKL…VKRRTLRKGD (75 aa)). Residues 161 to 189 (QSPYGGGRPGRVKRRTLRKGDGAGGDDEE) form a disordered region.

Belongs to the universal ribosomal protein uS4 family. As to quaternary structure, component of the small ribosomal subunit. Part of the small subunit (SSU) processome, composed of more than 70 proteins and the RNA chaperone small nucleolar RNA (snoRNA) U3.

It is found in the cytoplasm. The protein localises to the nucleus. It localises to the nucleolus. Functionally, component of the small ribosomal subunit. The ribosome is a large ribonucleoprotein complex responsible for the synthesis of proteins in the cell. Part of the small subunit (SSU) processome, first precursor of the small eukaryotic ribosomal subunit. During the assembly of the SSU processome in the nucleolus, many ribosome biogenesis factors, an RNA chaperone and ribosomal proteins associate with the nascent pre-rRNA and work in concert to generate RNA folding, modifications, rearrangements and cleavage as well as targeted degradation of pre-ribosomal RNA by the RNA exosome. The polypeptide is Small ribosomal subunit protein uS4 (rps-9) (Caenorhabditis elegans).